A 130-amino-acid chain; its full sequence is Small ribosomal subunit protein uS9 (130 aa).

Residues 106 to 130 are disordered; it reads RDSRKVERKKPGLKKARKASQFSKR. Residues 111-130 show a composition bias toward basic residues; the sequence is VERKKPGLKKARKASQFSKR.

It belongs to the universal ribosomal protein uS9 family.

In Streptococcus pneumoniae (strain ATCC 700669 / Spain 23F-1), this protein is Small ribosomal subunit protein uS9.